The following is a 354-amino-acid chain: MKPSPQFFLAAFLSLILQTGICYGIKWIALSKTPSSLALNQTQHCKQLEGLVVSQVQLCRSNLELMQTIIQAAREVIKTCRKTFSDMRWNCSSIELAPNYLLDLERGTRESAFVYALSAAAISHTIARACTTGDLPGCSCGPIPGETPGPGYRWGGCADNLNYGLIMGSKFSDAPMKMKKSGSQANKLMHLHNSEVGRQVLKASLEMKCKCHGVSGSCSIKTCWKGLQELRDIALDLKNKYLSATKVVHRPMGTRKYLVPKDIDIRPVKETELIYLQSSPDFCMKNEKVGSHGTQDRQCNKTSNGSDSCDLMCCGRGYNPYMDKVVERCHCKYHWCCYVTCKKCERTVERYVCK.

The first 24 residues, 1–24 (MKPSPQFFLAAFLSLILQTGICYG), serve as a signal peptide directing secretion. N-linked (GlcNAc...) asparagine glycans are attached at residues N40 and N90. Disulfide bonds link C80–C91, C130–C138, C140–C157, C209–C223, C211–C218, C283–C314, C299–C309, C313–C353, C329–C344, C331–C341, and C336–C337. S215 carries the O-palmitoleoyl serine; by PORCN lipid modification. Residues N300 and N304 are each glycosylated (N-linked (GlcNAc...) asparagine).

Belongs to the Wnt family. In terms of processing, palmitoleoylation is required for efficient binding to frizzled receptors. Depalmitoleoylation leads to Wnt signaling pathway inhibition. As to expression, expressed in the dermatome. The expression domain is mutually exclusive to the other Wnt genes.

It localises to the secreted. It is found in the extracellular space. Its subcellular location is the extracellular matrix. Ligand for members of the frizzled family of seven transmembrane receptors. May play a role in the formation of dermal structure, both limb and feather buds. Is likely to signal over only few cell diameters. The sequence is that of Protein Wnt-11 (WNT11) from Gallus gallus (Chicken).